A 237-amino-acid polypeptide reads, in one-letter code: Putative N-acetylmannosamine-6-phosphate 2-epimerase (237 aa).

Belongs to the NanE family.

The enzyme catalyses an N-acyl-D-glucosamine 6-phosphate = an N-acyl-D-mannosamine 6-phosphate. Its pathway is amino-sugar metabolism; N-acetylneuraminate degradation; D-fructose 6-phosphate from N-acetylneuraminate: step 3/5. In terms of biological role, converts N-acetylmannosamine-6-phosphate (ManNAc-6-P) to N-acetylglucosamine-6-phosphate (GlcNAc-6-P). The chain is Putative N-acetylmannosamine-6-phosphate 2-epimerase from Caldanaerobacter subterraneus subsp. tengcongensis (strain DSM 15242 / JCM 11007 / NBRC 100824 / MB4) (Thermoanaerobacter tengcongensis).